We begin with the raw amino-acid sequence, 311 residues long: Alpha/beta hydrolase domain-containing protein 17C (311 aa).

The disordered stretch occupies residues 48 to 67 (EAPASTAQQPPREEGSGEPA). Residues Ser193, Asp258, and His287 each act as charge relay system in the active site.

It belongs to the AB hydrolase superfamily. ABHD17 family. Palmitoylated on cysteine residues located in a cysteine cluster at the N-terminus which promotes membrane localization.

Its subcellular location is the recycling endosome membrane. It is found in the cell projection. The protein localises to the dendritic spine. It localises to the postsynaptic density membrane. The catalysed reaction is S-hexadecanoyl-L-cysteinyl-[protein] + H2O = L-cysteinyl-[protein] + hexadecanoate + H(+). Its function is as follows. Hydrolyzes fatty acids from S-acylated cysteine residues in proteins. Has depalmitoylating activity towards NRAS. This Xenopus laevis (African clawed frog) protein is Alpha/beta hydrolase domain-containing protein 17C.